Reading from the N-terminus, the 379-residue chain is tRNA-specific 2-thiouridylase MnmA (379 aa).

ATP-binding positions include 23–30 (AMSGGVDS) and L49. C117 serves as the catalytic Nucleophile. A disulfide bridge connects residues C117 and C214. G141 is a binding site for ATP. The segment at 163-165 (RDQ) is interaction with tRNA. Catalysis depends on C214, which acts as the Cysteine persulfide intermediate.

The protein belongs to the MnmA/TRMU family.

The protein resides in the cytoplasm. The catalysed reaction is S-sulfanyl-L-cysteinyl-[protein] + uridine(34) in tRNA + AH2 + ATP = 2-thiouridine(34) in tRNA + L-cysteinyl-[protein] + A + AMP + diphosphate + H(+). Catalyzes the 2-thiolation of uridine at the wobble position (U34) of tRNA, leading to the formation of s(2)U34. The protein is tRNA-specific 2-thiouridylase MnmA of Cereibacter sphaeroides (strain ATCC 17029 / ATH 2.4.9) (Rhodobacter sphaeroides).